A 203-amino-acid chain; its full sequence is ATP-dependent Clp protease proteolytic subunit (203 aa).

The active-site Nucleophile is serine 107. Histidine 132 is a catalytic residue.

This sequence belongs to the peptidase S14 family. As to quaternary structure, fourteen ClpP subunits assemble into 2 heptameric rings which stack back to back to give a disk-like structure with a central cavity, resembling the structure of eukaryotic proteasomes.

It is found in the cytoplasm. The enzyme catalyses Hydrolysis of proteins to small peptides in the presence of ATP and magnesium. alpha-casein is the usual test substrate. In the absence of ATP, only oligopeptides shorter than five residues are hydrolyzed (such as succinyl-Leu-Tyr-|-NHMec, and Leu-Tyr-Leu-|-Tyr-Trp, in which cleavage of the -Tyr-|-Leu- and -Tyr-|-Trp bonds also occurs).. Functionally, cleaves peptides in various proteins in a process that requires ATP hydrolysis. Has a chymotrypsin-like activity. Plays a major role in the degradation of misfolded proteins. This chain is ATP-dependent Clp protease proteolytic subunit, found in Shewanella pealeana (strain ATCC 700345 / ANG-SQ1).